The chain runs to 123 residues: UPF0102 protein Psyr_4114 (123 aa).

Belongs to the UPF0102 family.

The polypeptide is UPF0102 protein Psyr_4114 (Pseudomonas syringae pv. syringae (strain B728a)).